A 273-amino-acid polypeptide reads, in one-letter code: Nitrogenase iron protein 4 (273 aa).

An ATP-binding site is contributed by 8-15; that stretch reads GKGGIGKS. Cys94 provides a ligand contact to [4Fe-4S] cluster. Arg97 carries the post-translational modification ADP-ribosylarginine; by dinitrogenase reductase ADP-ribosyltransferase. A [4Fe-4S] cluster-binding site is contributed by Cys129.

It belongs to the NifH/BchL/ChlL family. In terms of assembly, homodimer. [4Fe-4S] cluster serves as cofactor. Post-translationally, the reversible ADP-ribosylation of Arg-97 inactivates the nitrogenase reductase and regulates nitrogenase activity.

The enzyme catalyses N2 + 8 reduced [2Fe-2S]-[ferredoxin] + 16 ATP + 16 H2O = H2 + 8 oxidized [2Fe-2S]-[ferredoxin] + 2 NH4(+) + 16 ADP + 16 phosphate + 6 H(+). Functionally, the key enzymatic reactions in nitrogen fixation are catalyzed by the nitrogenase complex, which has 2 components: the iron protein and the molybdenum-iron protein. The protein is Nitrogenase iron protein 4 (nifH4) of Clostridium pasteurianum.